We begin with the raw amino-acid sequence, 428 residues long: Spliceosome RNA helicase DDX39B (428 aa).

Residues 1-19 show a composition bias toward acidic residues; the sequence is MAENDVDNELLDYEDDEVE. The interval 1 to 31 is disordered; it reads MAENDVDNELLDYEDDEVETAAGGDGAEAPA. Ala-2 is subject to N-acetylalanine. The residue at position 36 (Lys-36) is an N6-acetyllysine; alternate. A Glycyl lysine isopeptide (Lys-Gly) (interchain with G-Cter in SUMO2); alternate cross-link involves residue Lys-36. Phosphoserine is present on residues Ser-38 and Ser-41. A Q motif motif is present at residues 45–73; it reads SGFRDFLLKPELLRAIVDCGFEHPSEVQH. The 174-residue stretch at 76-249 folds into the Helicase ATP-binding domain; sequence IPQAILGMDV…RKFMQDPMEI (174 aa). 89-96 is an ATP binding site; the sequence is AKSGMGKT. Position 172 is a phosphothreonine (Thr-172). Residues 196–199 carry the DECD box motif; sequence DECD. In terms of domain architecture, Helicase C-terminal spans 261–422; it reads GLQQYYVKLK…ELPDEIDISS (162 aa).

Belongs to the DEAD box helicase family. DECD subfamily. In terms of assembly, homodimer, and heterodimer with DDX39A. DDX39B interacts with the THO subcomplex to form the THO-DDX39B complex which multimerizes into a 28-subunit tetrameric assembly. Component of the transcription/export (TREX) complex at least composed of ALYREF/THOC4, DDX39B, SARNP/CIP29, CHTOP and the THO subcomplex; in the complex interacts with THOC2. THOC1-THOC2-THOC3-DDX39B subcomplex is sufficient for the interaction with export factor NXF1-NXT1. TREX seems to have a dynamic structure involving ATP-dependent remodeling. Within the TREX complex bridges ALYREF/THOC4 and the THO subcomplex, and, in a ATP-dependent manner, ALYREF/THOC4 and SARNP/CIP29. Component of the spliceosome. Interacts directly with U2AF2. Interacts with RBM8A, RNPS1 and SRRM1, FYTTD1/UIF, THOC1, MX1 and POLDIP3. Interacts with LUZP4. Interacts with SARNP/CIP29 (via the C-terminal domain); the interaction is direct and facilitates RNA binding of DDX39B. (Microbial infection) Interacts with human cytomegalovirus/HHV-5 protein UL69.

It is found in the nucleus. Its subcellular location is the nucleus speckle. The protein localises to the cytoplasm. It carries out the reaction ATP + H2O = ADP + phosphate + H(+). In terms of biological role, involved in nuclear export of spliced and unspliced mRNA. Component of the TREX complex which is thought to couple mRNA transcription, processing and nuclear export, and specifically associates with spliced mRNA and not with unspliced pre-mRNA. The TREX complex is recruited to spliced mRNAs by a transcription-independent mechanism, binds to mRNA upstream of the exon-junction complex (EJC) and is recruited in a splicing- and cap-dependent manner to a region near the 5' end of the mRNA where it functions in mRNA export to the cytoplasm via the TAP/NXF1 pathway. The THOC1-THOC2-THOC3 core complex alone is sufficient to promote ATPase activity of DDX39B; in the complex THOC2 is the only component that directly interacts with DDX39B. Associates with SARNP/CIP29, which facilitates RNA binding of DDX39B and likely plays a role in mRNA export. May undergo several rounds of ATP hydrolysis during assembly of TREX to drive subsequent loading of components such as ALYREF/THOC4 and CHTOP onto mRNA. Also associates with pre-mRNA independent of ALYREF/THOC4. Involved in the nuclear export of intronless mRNA; the ATP-bound form is proposed to recruit export adapter ALYREF/THOC4 to intronless mRNA; its ATPase activity is cooperatively stimulated by RNA and ALYREF/THOC4 and ATP hydrolysis is thought to trigger the dissociation from RNA to allow the association of ALYREF/THOC4 and the NXF1-NXT1 heterodimer. Involved in transcription elongation and genome stability. Its function is as follows. Splice factor that is required for the first ATP-dependent step in spliceosome assembly and for the interaction of U2 snRNP with the branchpoint. Has both RNA-stimulated ATP binding/hydrolysis activity and ATP-dependent RNA unwinding activity. Even with the stimulation of RNA, the ATPase activity is weak. Can only hydrolyze ATP but not other NTPs. The RNA stimulation of ATPase activity does not have a strong preference for the sequence and length of the RNA. However, ssRNA stimulates the ATPase activity much more strongly than dsRNA. Can unwind 5' or 3' overhangs or blunt end RNA duplexes in vitro. The ATPase and helicase activities are not influenced by U2AF2; the effect of ALYREF/THOC4 is reported conflictingly with [PubMed:23299939] reporting a stimulatory effect. (Microbial infection) The TREX complex is essential for the export of Kaposi's sarcoma-associated herpesvirus (KSHV) intronless mRNAs and infectious virus production. In Homo sapiens (Human), this protein is Spliceosome RNA helicase DDX39B.